Consider the following 273-residue polypeptide: Dermonecrotic toxin LhSicTox-alphaIA1i (273 aa).

H5 is a catalytic residue. 2 residues coordinate Mg(2+): E25 and D27. The active-site Nucleophile is the H41. Intrachain disulfides connect C45/C51 and C47/C190. D85 serves as a coordination point for Mg(2+).

It belongs to the arthropod phospholipase D family. Class II subfamily. The cofactor is Mg(2+). In terms of tissue distribution, expressed by the venom gland.

The protein resides in the secreted. It carries out the reaction an N-(acyl)-sphingosylphosphocholine = an N-(acyl)-sphingosyl-1,3-cyclic phosphate + choline. The catalysed reaction is an N-(acyl)-sphingosylphosphoethanolamine = an N-(acyl)-sphingosyl-1,3-cyclic phosphate + ethanolamine. The enzyme catalyses a 1-acyl-sn-glycero-3-phosphocholine = a 1-acyl-sn-glycero-2,3-cyclic phosphate + choline. It catalyses the reaction a 1-acyl-sn-glycero-3-phosphoethanolamine = a 1-acyl-sn-glycero-2,3-cyclic phosphate + ethanolamine. Dermonecrotic toxins cleave the phosphodiester linkage between the phosphate and headgroup of certain phospholipids (sphingolipid and lysolipid substrates), forming an alcohol (often choline) and a cyclic phosphate. This toxin acts on sphingomyelin (SM). It may also act on ceramide phosphoethanolamine (CPE), lysophosphatidylcholine (LPC) and lysophosphatidylethanolamine (LPE), but not on lysophosphatidylserine (LPS), and lysophosphatidylglycerol (LPG). It acts by transphosphatidylation, releasing exclusively cyclic phosphate products as second products. Induces dermonecrosis, hemolysis, increased vascular permeability, edema, inflammatory response, and platelet aggregation. The chain is Dermonecrotic toxin LhSicTox-alphaIA1i from Loxosceles hirsuta (Recluse spider).